The sequence spans 357 residues: Serine protease 1 (357 aa).

Residues 1–29 (MRRTTRARTGLSALLLAASLGLGAAPAGA) form the signal peptide. Residues 30–170 (DAPQRPAPTP…TRVPGVFQRE (141 aa)) constitute a propeptide that is removed on maturation. A disulfide bridge connects residues cysteine 184 and cysteine 204. Active-site charge relay system residues include histidine 203, aspartate 232, and serine 313. Cysteine 307 and cysteine 333 are oxidised to a cystine.

Belongs to the peptidase S1 family.

The protein localises to the secreted. Serine protease that preferentially cleaves peptide bonds on the C-terminal side of aspartate and glutamate with a 10-fold higher reactivity for a glutamyl bond than an aspartyl bond. In Streptomyces fradiae (Streptomyces roseoflavus), this protein is Serine protease 1.